A 319-amino-acid chain; its full sequence is Beta-ketoacyl-[acyl-carrier-protein] synthase III (319 aa).

Residues C115 and H246 contribute to the active site. The segment at 247–251 is ACP-binding; sequence QANLR. The active site involves N276.

Belongs to the thiolase-like superfamily. FabH family. Homodimer.

It is found in the cytoplasm. It catalyses the reaction malonyl-[ACP] + acetyl-CoA + H(+) = 3-oxobutanoyl-[ACP] + CO2 + CoA. Its pathway is lipid metabolism; fatty acid biosynthesis. Catalyzes the condensation reaction of fatty acid synthesis by the addition to an acyl acceptor of two carbons from malonyl-ACP. Catalyzes the first condensation reaction which initiates fatty acid synthesis and may therefore play a role in governing the total rate of fatty acid production. Possesses both acetoacetyl-ACP synthase and acetyl transacylase activities. Its substrate specificity determines the biosynthesis of branched-chain and/or straight-chain of fatty acids. The sequence is that of Beta-ketoacyl-[acyl-carrier-protein] synthase III from Coxiella burnetii (strain Dugway 5J108-111).